A 768-amino-acid polypeptide reads, in one-letter code: ATP-dependent zinc metalloprotease FtsH (768 aa).

Residues 1 to 33 (MADRDKNDIRKRLEELRKDNNRRNNRQDNGNRS) are Cytoplasmic-facing. A helical membrane pass occupies residues 34 to 54 (PFSGFLFFIFVILLFTFTLLF). Topologically, residues 55–139 (HRDIQTYFQE…KLNSLQPSGG (85 aa)) are periplasmic. A helical membrane pass occupies residues 140-160 (GFFLLLLGQFLPMIIMIGLMV). Topologically, residues 161-768 (YLAKKMVGGS…SNFKLPSFME (608 aa)) are cytoplasmic. 238–245 (GRPGTGKT) is a binding site for ATP. Histidine 461 contacts Zn(2+). The active site involves glutamate 462. Zn(2+)-binding residues include histidine 465 and aspartate 536. Residues 647–768 (EESIQKGSEG…SNFKLPSFME (122 aa)) form a disordered region. A compositionally biased stretch (basic and acidic residues) spans 669-698 (QENKTVEAEVHDSNLKSDTEKLAEAVREIT). Positions 715 to 731 (KDSDDNEKNDDDNENSD) are enriched in acidic residues.

The protein in the central section; belongs to the AAA ATPase family. It in the C-terminal section; belongs to the peptidase M41 family. Homohexamer. Zn(2+) is required as a cofactor.

Its subcellular location is the cell inner membrane. Functionally, acts as a processive, ATP-dependent zinc metallopeptidase for both cytoplasmic and membrane proteins. Plays a role in the quality control of integral membrane proteins. The sequence is that of ATP-dependent zinc metalloprotease FtsH from Leptotrichia buccalis (strain ATCC 14201 / DSM 1135 / JCM 12969 / NCTC 10249 / C-1013-b).